The following is a 283-amino-acid chain: Bifunctional protein FolD (283 aa).

NADP(+) is bound by residues 163 to 165 (GRS), Ser-188, and Ile-229.

Belongs to the tetrahydrofolate dehydrogenase/cyclohydrolase family. As to quaternary structure, homodimer.

It carries out the reaction (6R)-5,10-methylene-5,6,7,8-tetrahydrofolate + NADP(+) = (6R)-5,10-methenyltetrahydrofolate + NADPH. The catalysed reaction is (6R)-5,10-methenyltetrahydrofolate + H2O = (6R)-10-formyltetrahydrofolate + H(+). Its pathway is one-carbon metabolism; tetrahydrofolate interconversion. Functionally, catalyzes the oxidation of 5,10-methylenetetrahydrofolate to 5,10-methenyltetrahydrofolate and then the hydrolysis of 5,10-methenyltetrahydrofolate to 10-formyltetrahydrofolate. The chain is Bifunctional protein FolD from Campylobacter fetus subsp. fetus (strain 82-40).